A 461-amino-acid polypeptide reads, in one-letter code: Arginine biosynthesis bifunctional protein ArgJ, chloroplastic (461 aa).

Residues Thr-202, Lys-228, Thr-239, Glu-326, Asn-456, and Thr-461 each contribute to the substrate site. Thr-239 functions as the Nucleophile in the catalytic mechanism.

Belongs to the ArgJ family. In terms of assembly, heterodimer of an alpha and a beta chain.

Its subcellular location is the plastid. It is found in the chloroplast. It catalyses the reaction N(2)-acetyl-L-ornithine + L-glutamate = N-acetyl-L-glutamate + L-ornithine. The catalysed reaction is L-glutamate + acetyl-CoA = N-acetyl-L-glutamate + CoA + H(+). It functions in the pathway amino-acid biosynthesis; L-arginine biosynthesis; L-ornithine and N-acetyl-L-glutamate from L-glutamate and N(2)-acetyl-L-ornithine (cyclic): step 1/1. It participates in amino-acid biosynthesis; L-arginine biosynthesis; N(2)-acetyl-L-ornithine from L-glutamate: step 1/4. Functionally, catalyzes two activities which are involved in the cyclic version of arginine biosynthesis: the synthesis of acetylglutamate from glutamate and acetyl-CoA, and of ornithine by transacetylation between acetylornithine and glutamate. The chain is Arginine biosynthesis bifunctional protein ArgJ, chloroplastic from Ostreococcus lucimarinus (strain CCE9901).